A 635-amino-acid chain; its full sequence is Phosphatidylserine decarboxylase proenzyme 3 (635 aa).

A disordered region spans residues methionine 1–alanine 42. Glycine 2 is lipidated: N-myristoyl glycine. Positions serine 15 to serine 31 are enriched in basic residues. Residues glutamine 22–lysine 147 enclose the C2 domain. 2 consecutive EF-hand domains span residues alanine 180–valine 210 and valine 211–glutamine 246. Ca(2+)-binding residues include aspartate 188, aspartate 190, aspartate 192, lysine 194, glutamate 199, aspartate 224, asparagine 226, aspartate 228, and glutamate 235. Residues aspartate 442, histidine 498, and serine 586 each act as charge relay system; for autoendoproteolytic cleavage activity in the active site. Residue serine 586 is the Schiff-base intermediate with substrate; via pyruvic acid; for decarboxylase activity of the active site. A Pyruvic acid (Ser); by autocatalysis modification is found at serine 586.

The protein belongs to the phosphatidylserine decarboxylase family. PSD-B subfamily. Eukaryotic type II sub-subfamily. As to quaternary structure, heterodimer of a large membrane-associated beta subunit and a small pyruvoyl-containing alpha subunit. It depends on pyruvate as a cofactor. Post-translationally, is synthesized initially as an inactive proenzyme. Formation of the active enzyme involves a self-maturation process in which the active site pyruvoyl group is generated from an internal serine residue via an autocatalytic post-translational modification. Two non-identical subunits are generated from the proenzyme in this reaction, and the pyruvate is formed at the N-terminus of the alpha chain, which is derived from the carboxyl end of the proenzyme. The autoendoproteolytic cleavage occurs by a canonical serine protease mechanism, in which the side chain hydroxyl group of the serine supplies its oxygen atom to form the C-terminus of the beta chain, while the remainder of the serine residue undergoes an oxidative deamination to produce ammonia and the pyruvoyl prosthetic group on the alpha chain. During this reaction, the Ser that is part of the protease active site of the proenzyme becomes the pyruvoyl prosthetic group, which constitutes an essential element of the active site of the mature decarboxylase. As to expression, expressed in roots, leaves, stems and flowers.

Its subcellular location is the endoplasmic reticulum membrane. It catalyses the reaction a 1,2-diacyl-sn-glycero-3-phospho-L-serine + H(+) = a 1,2-diacyl-sn-glycero-3-phosphoethanolamine + CO2. It participates in phospholipid metabolism; phosphatidylethanolamine biosynthesis; phosphatidylethanolamine from CDP-diacylglycerol: step 2/2. Catalyzes the formation of phosphatidylethanolamine (PtdEtn) from phosphatidylserine (PtdSer). Plays a central role in phospholipid metabolism and in the interorganelle trafficking of phosphatidylserine. Contributes only to a minor proportion of PtdEtn production. The chain is Phosphatidylserine decarboxylase proenzyme 3 (PSD3) from Arabidopsis thaliana (Mouse-ear cress).